Consider the following 87-residue polypeptide: MAHKKAGGSSRNGRDSESKRLGVKVYGGQAINAGGIIVRQRGTRMHAGENVGMGKDHTLFALVDGHVKFTTKGAAKKHTVVVVPAAA.

Residues 1 to 21 are disordered; it reads MAHKKAGGSSRNGRDSESKRL.

This sequence belongs to the bacterial ribosomal protein bL27 family.

The sequence is that of Large ribosomal subunit protein bL27 from Burkholderia mallei (strain NCTC 10247).